The chain runs to 263 residues: Shikimate dehydrogenase (NADP(+)) (263 aa).

Residues 14-16 (SLS) and Thr-60 contribute to the shikimate site. The active-site Proton acceptor is the Lys-64. Asn-85 and Asp-100 together coordinate shikimate. NADP(+)-binding positions include 123–127 (GAGGA), 146–151 (NRTPQR), and Leu-205. Tyr-207 is a binding site for shikimate. Gly-228 is a binding site for NADP(+).

The protein belongs to the shikimate dehydrogenase family. Homodimer.

The catalysed reaction is shikimate + NADP(+) = 3-dehydroshikimate + NADPH + H(+). The protein operates within metabolic intermediate biosynthesis; chorismate biosynthesis; chorismate from D-erythrose 4-phosphate and phosphoenolpyruvate: step 4/7. Its function is as follows. Involved in the biosynthesis of the chorismate, which leads to the biosynthesis of aromatic amino acids. Catalyzes the reversible NADPH linked reduction of 3-dehydroshikimate (DHSA) to yield shikimate (SA). The protein is Shikimate dehydrogenase (NADP(+)) of Thermus thermophilus (strain ATCC BAA-163 / DSM 7039 / HB27).